A 122-amino-acid polypeptide reads, in one-letter code: Serum amyloid A-1 protein (122 aa).

Residues 1-19 (MKLLTSLVFCSLLLGVCHG) form the signal peptide. An important for amyloid formation region spans residues 20-45 (GFFSFVHEAFQGAGDMWRAYTDMKEA). Residues 91 to 108 (HEDTIADQEANRHGRSGK) show a composition bias toward basic and acidic residues. The tract at residues 91–122 (HEDTIADQEANRHGRSGKDPNYYRPPGLPDKY) is disordered.

Belongs to the SAA family. In terms of assembly, homohexamer; dimer of trimers. Can form amyloid fibrils after partial proteolysis; the native, undenatured protein does not form amyloid fibrils (in vitro). Apolipoprotein of the HDL complex. Binds to heparin. As to expression, detected in blood plasma (at protein level). Detected in liver.

The protein localises to the secreted. In terms of biological role, major acute phase protein. This Mus musculus (Mouse) protein is Serum amyloid A-1 protein (Saa1).